The chain runs to 130 residues: Flagellar assembly factor FliW (130 aa).

Belongs to the FliW family. As to quaternary structure, interacts with translational regulator CsrA and flagellin(s).

The protein resides in the cytoplasm. Functionally, acts as an anti-CsrA protein, binds CsrA and prevents it from repressing translation of its target genes, one of which is flagellin. Binds to flagellin and participates in the assembly of the flagellum. In Borrelia duttonii (strain Ly), this protein is Flagellar assembly factor FliW.